Reading from the N-terminus, the 317-residue chain is MAVQGFQRRLLGSLNSTPTAIPQLGLAANQTGARCLEVSIPDGLFLSLGLVSLVENVLVVATIAKNRNLHSPTYCFICCLALSDLLVSGGNVLETVVILLLEASALAARAAVVQPLDNVIDVITCSSMVSSLCFLGAIAVDRYVSIFYALRYHSIVTLPRARQAIAAIWVASVLFSTLFIAYYDHAAVLLCLVVFFLAMLVXMAVLYVHMLARACQHAQGIARLHKRQRPLHQGFGLKGAVTLTILLGIFFLCWGPFFLHLTLIVLCPQHPTCSCIFKNFNLFLTLIICNAIIDPLIYAFRRQELRRTLKEGLTCSW.

The Extracellular segment spans residues 1–37 (MAVQGFQRRLLGSLNSTPTAIPQLGLAANQTGARCLE). Asn-29 carries an N-linked (GlcNAc...) asparagine glycan. The chain crosses the membrane as a helical span at residues 38 to 63 (VSIPDGLFLSLGLVSLVENVLVVATI). The Cytoplasmic portion of the chain corresponds to 64–72 (AKNRNLHSP). Residues 73–93 (TYCFICCLALSDLLVSGGNVL) form a helical membrane-spanning segment. Residues 94-118 (ETVVILLLEASALAARAAVVQPLDN) are Extracellular-facing. The helical transmembrane segment at 119-140 (VIDVITCSSMVSSLCFLGAIAV) threads the bilayer. The Cytoplasmic segment spans residues 141–163 (DRYVSIFYALRYHSIVTLPRARQ). Residues 164–183 (AIAAIWVASVLFSTLFIAYY) form a helical membrane-spanning segment. The Extracellular segment spans residues 184–191 (DHAAVLLC). A helical membrane pass occupies residues 192 to 211 (LVVFFLAMLVXMAVLYVHML). Over 212–240 (ARACQHAQGIARLHKRQRPLHQGFGLKGA) the chain is Cytoplasmic. Residues 241–266 (VTLTILLGIFFLCWGPFFLHLTLIVL) form a helical membrane-spanning segment. Over 267–279 (CPQHPTCSCIFKN) the chain is Extracellular. A helical membrane pass occupies residues 280–300 (FNLFLTLIICNAIIDPLIYAF). The Cytoplasmic portion of the chain corresponds to 301–317 (RRQELRRTLKEGLTCSW). Cys-315 carries S-palmitoyl cysteine lipidation.

Belongs to the G-protein coupled receptor 1 family. In terms of assembly, interacts with MGRN1, but does not undergo MGRN1-mediated ubiquitination; this interaction competes with GNAS-binding and thus inhibits agonist-induced cAMP production. Interacts with OPN3; the interaction results in a decrease in MC1R-mediated cAMP signaling and ultimately a decrease in melanin production in melanocytes.

Its subcellular location is the cell membrane. Functionally, receptor for MSH (alpha, beta and gamma) and ACTH. The activity of this receptor is mediated by G proteins which activate adenylate cyclase. Mediates melanogenesis, the production of eumelanin (black/brown) and phaeomelanin (red/yellow), via regulation of cAMP signaling in melanocytes. This Hylobates muelleri (Mueller's Bornean gibbon) protein is Melanocyte-stimulating hormone receptor (MC1R).